A 103-amino-acid polypeptide reads, in one-letter code: Cystatin-A1 (103 aa).

A Secondary area of contact motif is present at residues 51 to 55 (QVVAG).

It belongs to the cystatin family.

The protein resides in the cytoplasm. Functionally, this is an intracellular thiol proteinase inhibitor. This Sus scrofa (Pig) protein is Cystatin-A1.